The following is a 369-amino-acid chain: Chaperone protein DnaJ (369 aa).

The J domain occupies 4 to 69 (SYYEILEVEK…KKRALYDRYG (66 aa)). A CR-type zinc finger spans residues 130–207 (GCKKTIKVQY…CKGKTYILKD (78 aa)). Residues Cys-143, Cys-146, Cys-159, Cys-162, Cys-181, Cys-184, Cys-195, and Cys-198 each coordinate Zn(2+). CXXCXGXG motif repeat units follow at residues 143–150 (CESCDGTG), 159–166 (CKQCNGQG), 181–188 (CGACQGKG), and 195–202 (CQACKGKT).

Belongs to the DnaJ family. In terms of assembly, homodimer. Zn(2+) is required as a cofactor.

It is found in the cytoplasm. Functionally, participates actively in the response to hyperosmotic and heat shock by preventing the aggregation of stress-denatured proteins and by disaggregating proteins, also in an autonomous, DnaK-independent fashion. Unfolded proteins bind initially to DnaJ; upon interaction with the DnaJ-bound protein, DnaK hydrolyzes its bound ATP, resulting in the formation of a stable complex. GrpE releases ADP from DnaK; ATP binding to DnaK triggers the release of the substrate protein, thus completing the reaction cycle. Several rounds of ATP-dependent interactions between DnaJ, DnaK and GrpE are required for fully efficient folding. Also involved, together with DnaK and GrpE, in the DNA replication of plasmids through activation of initiation proteins. This is Chaperone protein DnaJ from Helicobacter pylori (strain ATCC 700392 / 26695) (Campylobacter pylori).